We begin with the raw amino-acid sequence, 334 residues long: MSLLNDIDQLSQVRTDWTRETAGEIYRAPFNDLIFAAQSVHRQCHPANQVQTSQLLSIKTGGCAEDCGYCNQSAHFDTGLKASKLMPLDDVLDAAKKAKDGGATRFCMGAAWRELKTRDEDVICDMISGVKSMGMETCVTLGMLTDSQANKLREAGLDYYNHNLDTAPEDYGRVISTRTYQDRIDTLSRVRGAGIHVCTGGIVGMGEDEAARIGLLTELASMDPHPESVPINHLVAVPNTPLGDSKPLDGIEFVRTIATARILMPRSMVRLSAGREGMSRELQALCFLAGANSIFVGEELLTTPNPEQNEDFDLFKSLGIEPMRLGETGTVPAE.

The region spanning 48–275 (NQVQTSQLLS…RSMVRLSAGR (228 aa)) is the Radical SAM core domain. Positions 63, 67, and 70 each coordinate [4Fe-4S] cluster. Residues cysteine 107, cysteine 138, cysteine 198, and arginine 270 each contribute to the [2Fe-2S] cluster site.

Belongs to the radical SAM superfamily. Biotin synthase family. As to quaternary structure, homodimer. Requires [4Fe-4S] cluster as cofactor. The cofactor is [2Fe-2S] cluster.

It catalyses the reaction (4R,5S)-dethiobiotin + (sulfur carrier)-SH + 2 reduced [2Fe-2S]-[ferredoxin] + 2 S-adenosyl-L-methionine = (sulfur carrier)-H + biotin + 2 5'-deoxyadenosine + 2 L-methionine + 2 oxidized [2Fe-2S]-[ferredoxin]. The protein operates within cofactor biosynthesis; biotin biosynthesis; biotin from 7,8-diaminononanoate: step 2/2. Its function is as follows. Catalyzes the conversion of dethiobiotin (DTB) to biotin by the insertion of a sulfur atom into dethiobiotin via a radical-based mechanism. This is Biotin synthase from Maricaulis maris (strain MCS10) (Caulobacter maris).